The chain runs to 122 residues: Large ribosomal subunit protein uL14 (122 aa).

It belongs to the universal ribosomal protein uL14 family. As to quaternary structure, part of the 50S ribosomal subunit. Forms a cluster with proteins L3 and L19. In the 70S ribosome, L14 and L19 interact and together make contacts with the 16S rRNA in bridges B5 and B8.

In terms of biological role, binds to 23S rRNA. Forms part of two intersubunit bridges in the 70S ribosome. In Mycoplasmopsis agalactiae (strain NCTC 10123 / CIP 59.7 / PG2) (Mycoplasma agalactiae), this protein is Large ribosomal subunit protein uL14.